A 347-amino-acid polypeptide reads, in one-letter code: Transcription elongation factor A protein 3 (347 aa).

The TFIIS N-terminal domain maps to 5–82 (EELLRIAKKL…KNWKRLLDSP (78 aa)). Residues 83-100 (RTTKGEREEREKAKKEKG) show a composition bias toward basic and acidic residues. The tract at residues 83–168 (RTTKGEREER…TTPSSPSTPT (86 aa)) is disordered. S113 is modified (phosphoserine). Basic and acidic residues predominate over residues 119–131 (GGGEPKTRRDSVD). Composition is skewed to low complexity over residues 132–142 (SRSSTTSSPKR) and 157–168 (TPTTPSSPSTPT). Phosphoserine is present on S139. The TFIIS central domain occupies 186–302 (VRDKCVEMLS…EHQMAKTGGT (117 aa)). Residues 305-345 (DLLRCSKCKKKNCTYNQVQTRSADEPMTTFVLCNECGNRWK) form a TFIIS-type zinc finger. Zn(2+) contacts are provided by C309, C312, C337, and C340.

This sequence belongs to the TFS-II family. Liver, kidney and heart.

It localises to the nucleus. Functionally, necessary for efficient RNA polymerase II transcription elongation past template-encoded arresting sites. The arresting sites in DNA have the property of trapping a certain fraction of elongating RNA polymerases that pass through, resulting in locked ternary complexes. Cleavage of the nascent transcript by S-II allows the resumption of elongation from the new 3'-terminus. This is Transcription elongation factor A protein 3 (Tcea3) from Mus musculus (Mouse).